The chain runs to 278 residues: MKYWNLKKINQSSLDKTGVIPRSISKLFEKFKKELDPNAEVEAIEEFKVARYQTIASVKYVVFLFIIPVLINQVSKSFLFGPFINYLWNRDEHIIFLNHSQEERAFAELQRFEEKLHFEILIGKIDSPSSNLINYKMTEKALELAIDYANESSCAITNILADLLSIAIFISILISSKRQFSILKSFLNELIYSLSDTAKAFLIILFTDMFVGFHSPHGWEVIIEIILRHLGLPESRDFIFVFISTFPVILDTIFKYWIFRYLNKISPSAVATYHNMNE.

4 consecutive transmembrane segments (helical) span residues 61–81 (VVFL…FLFG), 154–174 (CAIT…SILI), 203–223 (IILF…EVII), and 238–258 (FIFV…KYWI).

The protein belongs to the CemA family.

The protein localises to the plastid. It localises to the chloroplast inner membrane. It catalyses the reaction K(+)(in) + H(+)(out) = K(+)(out) + H(+)(in). In terms of biological role, contributes to K(+)/H(+) antiport activity by supporting proton efflux to control proton extrusion and homeostasis in chloroplasts in a light-dependent manner to modulate photosynthesis. Prevents excessive induction of non-photochemical quenching (NPQ) under continuous-light conditions. Indirectly promotes efficient inorganic carbon uptake into chloroplasts. The protein is Potassium/proton antiporter CemA of Gracilaria tenuistipitata var. liui (Red alga).